The sequence spans 127 residues: Transcription antitermination protein NusB (127 aa).

The protein belongs to the NusB family.

In terms of biological role, involved in transcription antitermination. Required for transcription of ribosomal RNA (rRNA) genes. Binds specifically to the boxA antiterminator sequence of the ribosomal RNA (rrn) operons. In Lysinibacillus sphaericus (strain C3-41), this protein is Transcription antitermination protein NusB.